A 429-amino-acid polypeptide reads, in one-letter code: Adenosylhomocysteinase (429 aa).

The substrate site is built by threonine 64, aspartate 136, and glutamate 161. 162 to 164 is an NAD(+) binding site; that stretch reads TTT. Positions 191 and 195 each coordinate substrate. Residues asparagine 196, 225–230, glutamate 248, asparagine 283, 304–306, and asparagine 351 each bind NAD(+); these read GYGWCG and SGH.

The protein belongs to the adenosylhomocysteinase family. It depends on NAD(+) as a cofactor.

It is found in the cytoplasm. The enzyme catalyses S-adenosyl-L-homocysteine + H2O = L-homocysteine + adenosine. Its pathway is amino-acid biosynthesis; L-homocysteine biosynthesis; L-homocysteine from S-adenosyl-L-homocysteine: step 1/1. May play a key role in the regulation of the intracellular concentration of adenosylhomocysteine. The sequence is that of Adenosylhomocysteinase from Gloeothece citriformis (strain PCC 7424) (Cyanothece sp. (strain PCC 7424)).